The primary structure comprises 269 residues: AA9 family lytic polysaccharide monooxygenase I (269 aa).

Residues 1-17 form the signal peptide; the sequence is MFSKKITALALVSAVKA. Positions 18 and 103 each coordinate Cu(2+). Cysteine 73 and cysteine 196 are oxidised to a cystine. Asparagine 156 carries N-linked (GlcNAc...) asparagine glycosylation. O2-binding residues include histidine 182 and glutamine 191. Cu(2+) is bound at residue tyrosine 193.

Belongs to the polysaccharide monooxygenase AA9 family. Requires Cu(2+) as cofactor.

The protein localises to the secreted. The catalysed reaction is [(1-&gt;4)-beta-D-glucosyl]n+m + reduced acceptor + O2 = 4-dehydro-beta-D-glucosyl-[(1-&gt;4)-beta-D-glucosyl]n-1 + [(1-&gt;4)-beta-D-glucosyl]m + acceptor + H2O.. Functionally, lytic polysaccharide monooxygenase (LPMO) that depolymerizes crystalline and amorphous polysaccharides via the oxidation of scissile alpha- or beta-(1-4)-glycosidic bonds, yielding C1 and C4 oxidation products. Catalysis by LPMOs requires the reduction of the active-site copper from Cu(II) to Cu(I) by a reducing agent and H(2)O(2) or O(2) as a cosubstrate. The protein is AA9 family lytic polysaccharide monooxygenase I of Botryotinia fuckeliana (strain B05.10) (Noble rot fungus).